A 232-amino-acid polypeptide reads, in one-letter code: Phospholipase A2 hemilipin (232 aa).

Residues 1–18 (MTFLILTILATVTPSLYS) form the signal peptide. Positions 19–105 (HVVQRELRVN…QRCSGSAEGR (87 aa)) are excised as a propeptide. The Ca(2+) site is built by Trp115, Gly117, and Gly119. 5 disulfides stabilise this stretch: Cys116/Cys137, Cys136/Cys175, Cys143/Cys168, Cys166/Cys206, and Cys211/Cys219. Residue Asn124 is glycosylated (N-linked (GlcNAc...) asparagine). The active site involves His140. Asp141 contacts Ca(2+). Residue Asn157 is glycosylated (N-linked (GlcNAc...) asparagine). A propeptide spanning residues 214–217 (KRDA) is cleaved from the precursor.

It belongs to the phospholipase A2 family. Group III subfamily. In terms of assembly, heterodimer composed of a small subunit and a large subunit; disulfid-linked. Ca(2+) serves as cofactor. In terms of tissue distribution, expressed by the venom gland.

The protein localises to the secreted. It carries out the reaction a 1,2-diacyl-sn-glycero-3-phosphocholine + H2O = a 1-acyl-sn-glycero-3-phosphocholine + a fatty acid + H(+). Scorpion venom phospholipase A2 (PLA2) that shows high hydrolytic activities towards lecithin and acts as an effective blocker of all angiogenesis key steps in vivo and in vitro. It has no effect on apoptosis and does not display hemolytic, inflammatory or neurotoxic effects. PLA2 catalyzes the calcium-dependent hydrolysis of the 2-acyl groups in 3-sn-phosphoglycerides. This Hemiscorpius lepturus (Scorpion) protein is Phospholipase A2 hemilipin.